We begin with the raw amino-acid sequence, 129 residues long: L-ectoine synthase (129 aa).

Belongs to the ectoine synthase family.

It catalyses the reaction (2S)-4-acetamido-2-aminobutanoate = L-ectoine + H2O. It functions in the pathway amine and polyamine biosynthesis; ectoine biosynthesis; L-ectoine from L-aspartate 4-semialdehyde: step 3/3. Functionally, catalyzes the circularization of gamma-N-acetyl-alpha,gamma-diaminobutyric acid (ADABA) to ectoine (1,4,5,6-tetrahydro-2-methyl-4-pyrimidine carboxylic acid), which is an excellent osmoprotectant. The sequence is that of L-ectoine synthase from Desulfosudis oleivorans (strain DSM 6200 / JCM 39069 / Hxd3) (Desulfococcus oleovorans).